Reading from the N-terminus, the 456-residue chain is Bifunctional protein GlmU (456 aa).

Positions 1 to 229 (MLNSAMSVVI…ISETDGVNNR (229 aa)) are pyrophosphorylase. Residues 11 to 14 (LAAG), K25, Q76, 81 to 82 (GT), 103 to 105 (YGD), G140, E154, N169, and N227 contribute to the UDP-N-acetyl-alpha-D-glucosamine site. Position 105 (D105) interacts with Mg(2+). Position 227 (N227) interacts with Mg(2+). The interval 230–250 (LQLSRLERIYQAEQAEKLLLS) is linker. Residues 251–456 (GVMLRDPARF…QGWQRPVKKK (206 aa)) are N-acetyltransferase. Residues R333 and K351 each contribute to the UDP-N-acetyl-alpha-D-glucosamine site. The active-site Proton acceptor is H363. Residues Y366 and N377 each contribute to the UDP-N-acetyl-alpha-D-glucosamine site. Residues A380, 386-387 (NY), S405, A423, and R440 contribute to the acetyl-CoA site.

In the N-terminal section; belongs to the N-acetylglucosamine-1-phosphate uridyltransferase family. This sequence in the C-terminal section; belongs to the transferase hexapeptide repeat family. As to quaternary structure, homotrimer. Mg(2+) is required as a cofactor.

It localises to the cytoplasm. It catalyses the reaction alpha-D-glucosamine 1-phosphate + acetyl-CoA = N-acetyl-alpha-D-glucosamine 1-phosphate + CoA + H(+). It carries out the reaction N-acetyl-alpha-D-glucosamine 1-phosphate + UTP + H(+) = UDP-N-acetyl-alpha-D-glucosamine + diphosphate. It functions in the pathway nucleotide-sugar biosynthesis; UDP-N-acetyl-alpha-D-glucosamine biosynthesis; N-acetyl-alpha-D-glucosamine 1-phosphate from alpha-D-glucosamine 6-phosphate (route II): step 2/2. Its pathway is nucleotide-sugar biosynthesis; UDP-N-acetyl-alpha-D-glucosamine biosynthesis; UDP-N-acetyl-alpha-D-glucosamine from N-acetyl-alpha-D-glucosamine 1-phosphate: step 1/1. It participates in bacterial outer membrane biogenesis; LPS lipid A biosynthesis. Its function is as follows. Catalyzes the last two sequential reactions in the de novo biosynthetic pathway for UDP-N-acetylglucosamine (UDP-GlcNAc). The C-terminal domain catalyzes the transfer of acetyl group from acetyl coenzyme A to glucosamine-1-phosphate (GlcN-1-P) to produce N-acetylglucosamine-1-phosphate (GlcNAc-1-P), which is converted into UDP-GlcNAc by the transfer of uridine 5-monophosphate (from uridine 5-triphosphate), a reaction catalyzed by the N-terminal domain. This chain is Bifunctional protein GlmU, found in Salmonella dublin (strain CT_02021853).